A 468-amino-acid chain; its full sequence is tRNA (guanine(37)-N(1))-methyltransferase 1 (468 aa).

S-adenosyl-L-methionine is bound by residues histidine 207, 245-246 (DL), and 273-274 (DA). The disordered stretch occupies residues 301–348 (KEAAVSRGGETNSSGEEIRESNASINEPLGANKKPSGTTKTENGVGKD). Positions 309-325 (GETNSSGEEIRESNASI) are enriched in polar residues. Residue asparagine 380 participates in S-adenosyl-L-methionine binding.

Belongs to the class I-like SAM-binding methyltransferase superfamily. TRM5/TYW2 family. As to quaternary structure, monomer.

It is found in the mitochondrion matrix. Its subcellular location is the nucleus. It localises to the cytoplasm. The enzyme catalyses guanosine(37) in tRNA + S-adenosyl-L-methionine = N(1)-methylguanosine(37) in tRNA + S-adenosyl-L-homocysteine + H(+). In terms of biological role, specifically methylates the N1 position of guanosine-37 in various cytoplasmic and mitochondrial tRNAs. Methylation is not dependent on the nature of the nucleoside 5' of the target nucleoside. This is the first step in the biosynthesis of wybutosine (yW), a modified base adjacent to the anticodon of tRNAs and required for accurate decoding. The chain is tRNA (guanine(37)-N(1))-methyltransferase 1 from Arabidopsis thaliana (Mouse-ear cress).